We begin with the raw amino-acid sequence, 423 residues long: Gamma-glutamyl phosphate reductase (423 aa).

The protein belongs to the gamma-glutamyl phosphate reductase family.

Its subcellular location is the cytoplasm. It catalyses the reaction L-glutamate 5-semialdehyde + phosphate + NADP(+) = L-glutamyl 5-phosphate + NADPH + H(+). The protein operates within amino-acid biosynthesis; L-proline biosynthesis; L-glutamate 5-semialdehyde from L-glutamate: step 2/2. In terms of biological role, catalyzes the NADPH-dependent reduction of L-glutamate 5-phosphate into L-glutamate 5-semialdehyde and phosphate. The product spontaneously undergoes cyclization to form 1-pyrroline-5-carboxylate. The sequence is that of Gamma-glutamyl phosphate reductase from Paraburkholderia xenovorans (strain LB400).